Here is a 244-residue protein sequence, read N- to C-terminus: MPAPLETCISDLDCSSSNSSSDLSSFLTDEEDCARLQPLASTSGLSVPARRSAPALSGASNVPGAQDEEQERRRRRGRARVRSEALLHSLRRSRRVKANDRERNRMHNLNAALDALRSVLPSFPDDTKLTKIETLRFAYNYIWALAETLRLADQGLPGGSARERLLPPQCVPCLPGPPSPASDTESWGSGAAASPCATVASPLSDPSSPSASEDFTYGPGDPLFSFPGLPKDLLHTTPCFIPYH.

2 disordered regions span residues 1-27 and 39-82; these read MPAPLETCISDLDCSSSNSSSDLSSFL and LAST…ARVR. The span at 10–27 shows a compositional bias: low complexity; it reads SDLDCSSSNSSSDLSSFL. One can recognise a bHLH domain in the interval 93–145; the sequence is SRRVKANDRERNRMHNLNAALDALRSVLPSFPDDTKLTKIETLRFAYNYIWAL.

In terms of assembly, efficient DNA binding requires dimerization with another bHLH protein. Expression restricted to the embryonic nervous system.

The protein resides in the nucleus. Functionally, acts as a transcriptional regulator. Involved in the initiation of neuronal differentiation. Activates transcription by binding to the E box (5'-CANNTG-3'). Associates with chromatin to enhancer regulatory elements in genes encoding key transcriptional regulators of neurogenesis. The protein is Neurogenin-1 (Neurog1) of Mus musculus (Mouse).